The primary structure comprises 139 residues: Mitochondrial intermembrane space import and assembly protein 40 (139 aa).

3 cysteine pairs are disulfide-bonded: Cys-53–Cys-55, Cys-64–Cys-97, and Cys-74–Cys-87. A CHCH domain is found at 61-105 (SGPCGEQFKSAFSCFHYSQEEIKGSDCLDQFRAMQECMQKYPDIY). 2 consecutive short sequence motifs (cx9C motif) follow at residues 64–74 (CGEQFKSAFSC) and 87–97 (CLDQFRAMQEC). The segment at 102–139 (PDIYPQEDDEDEAEKEKQNKEAEAFSTETSDTKEESSS) is disordered. The segment covering 115-124 (EKEKQNKEAE) has biased composition (basic and acidic residues).

Monomer. Can form homooligomers.

The protein localises to the mitochondrion intermembrane space. In terms of biological role, central component of a redox-sensitive mitochondrial intermembrane space import machinery which is required for the biogenesis of respiratory chain complexes. Functions as chaperone and catalyzes the formation of disulfide bonds in substrate proteins, such as COX17 or MICU1. Required for the import and folding of small cysteine-containing proteins (small Tim) in the mitochondrial intermembrane space (IMS). Precursor proteins to be imported into the IMS are translocated in their reduced form into the mitochondria. The sequence is that of Mitochondrial intermembrane space import and assembly protein 40 (chchd4) from Xenopus tropicalis (Western clawed frog).